A 139-amino-acid chain; its full sequence is uncharacterized protein (139 aa).

This is an uncharacterized protein from Ostreid herpesvirus 1 (isolate France) (OsHV-1).